The following is a 99-amino-acid chain: Cystatin (99 aa).

A Cystatin domain is found at 3-99; it reads GGLSPRSVSD…EEKLCGFQVW (97 aa). Residues 47–51 carry the Secondary area of contact motif; sequence QSVAG. Cysteine 65 and cysteine 81 are disulfide-bonded.

This sequence belongs to the cystatin family. Expressed by the venom gland.

Its subcellular location is the secreted. Functionally, inhibits various C1 cysteine proteases including cathepsin L (Ki is 0.1 nM), papain (Ki is 0.19 nM), cathepsin S (Ki is 1.2 nM), and cathepsin B (Ki is 2.5 nM). This protein has no toxic activity and its function in the venom is unknown. It may play a role as housekeeping or regulatory protein. The chain is Cystatin from Naja atra (Chinese cobra).